An 876-amino-acid polypeptide reads, in one-letter code: Leucine--tRNA ligase (876 aa).

Residues 1–20 (MATERYNPRDAEPRWQQKWN) form a disordered region. Residues 43–53 (PYPSGRIHMGH) carry the 'HIGH' region motif. Residues 632–636 (KMSKS) carry the 'KMSKS' region motif. An ATP-binding site is contributed by Lys635.

The protein belongs to the class-I aminoacyl-tRNA synthetase family.

Its subcellular location is the cytoplasm. The catalysed reaction is tRNA(Leu) + L-leucine + ATP = L-leucyl-tRNA(Leu) + AMP + diphosphate. The sequence is that of Leucine--tRNA ligase from Rhizobium leguminosarum bv. trifolii (strain WSM2304).